We begin with the raw amino-acid sequence, 220 residues long: ATP-dependent Clp protease proteolytic subunit 1 (220 aa).

Residue serine 118 is the Nucleophile of the active site. Histidine 143 is a catalytic residue.

The protein belongs to the peptidase S14 family. As to quaternary structure, fourteen ClpP subunits assemble into 2 heptameric rings which stack back to back to give a disk-like structure with a central cavity, resembling the structure of eukaryotic proteasomes.

The protein resides in the cytoplasm. The catalysed reaction is Hydrolysis of proteins to small peptides in the presence of ATP and magnesium. alpha-casein is the usual test substrate. In the absence of ATP, only oligopeptides shorter than five residues are hydrolyzed (such as succinyl-Leu-Tyr-|-NHMec, and Leu-Tyr-Leu-|-Tyr-Trp, in which cleavage of the -Tyr-|-Leu- and -Tyr-|-Trp bonds also occurs).. Cleaves peptides in various proteins in a process that requires ATP hydrolysis. Has a chymotrypsin-like activity. Plays a major role in the degradation of misfolded proteins. In Rhodococcus jostii (strain RHA1), this protein is ATP-dependent Clp protease proteolytic subunit 1.